The following is a 622-amino-acid chain: Auxin response factor 11 (622 aa).

The segment at residues 145-247 (FVKILTASDT…DLRVGVRRLA (103 aa)) is a DNA-binding region (TF-B3). Disordered stretches follow at residues 358–398 (SIQR…ISEI) and 483–513 (SNIS…TRSR). 2 stretches are compositionally biased toward polar residues: residues 376–387 (SALTPTPTQQQS) and 483–511 (SNIS…TSTR). A PB1 domain is found at 511-594 (RSRIKVQMQG…KKLFIYPSDE (84 aa)).

It belongs to the ARF family. As to quaternary structure, homodimers and heterodimers.

It localises to the nucleus. In terms of biological role, auxin response factors (ARFs) are transcriptional factors that bind specifically to the DNA sequence 5'-TGTCTC-3' found in the auxin-responsive promoter elements (AuxREs). Could act as transcriptional activator or repressor. Formation of heterodimers with Aux/IAA proteins may alter their ability to modulate early auxin response genes expression. In Arabidopsis thaliana (Mouse-ear cress), this protein is Auxin response factor 11 (ARF11).